The chain runs to 339 residues: Holliday junction branch migration complex subunit RuvB (339 aa).

Residues 1–181 (MEERLVSGYE…FGMVHRLEFY (181 aa)) form a large ATPase domain (RuvB-L) region. Residues leucine 20, arginine 21, glycine 62, lysine 65, threonine 66, threonine 67, 128-130 (EDF), arginine 171, tyrosine 181, and arginine 218 each bind ATP. Residue threonine 66 coordinates Mg(2+). The interval 182 to 252 (SVEELMLIIN…NAKAALDLLE (71 aa)) is small ATPAse domain (RuvB-S). A head domain (RuvB-H) region spans residues 255–339 (ELGLDPTDRL…NKNAGELSLW (85 aa)). DNA is bound by residues arginine 310 and arginine 315.

It belongs to the RuvB family. In terms of assembly, homohexamer. Forms an RuvA(8)-RuvB(12)-Holliday junction (HJ) complex. HJ DNA is sandwiched between 2 RuvA tetramers; dsDNA enters through RuvA and exits via RuvB. An RuvB hexamer assembles on each DNA strand where it exits the tetramer. Each RuvB hexamer is contacted by two RuvA subunits (via domain III) on 2 adjacent RuvB subunits; this complex drives branch migration. In the full resolvosome a probable DNA-RuvA(4)-RuvB(12)-RuvC(2) complex forms which resolves the HJ.

The protein resides in the cytoplasm. It carries out the reaction ATP + H2O = ADP + phosphate + H(+). The RuvA-RuvB-RuvC complex processes Holliday junction (HJ) DNA during genetic recombination and DNA repair, while the RuvA-RuvB complex plays an important role in the rescue of blocked DNA replication forks via replication fork reversal (RFR). RuvA specifically binds to HJ cruciform DNA, conferring on it an open structure. The RuvB hexamer acts as an ATP-dependent pump, pulling dsDNA into and through the RuvAB complex. RuvB forms 2 homohexamers on either side of HJ DNA bound by 1 or 2 RuvA tetramers; 4 subunits per hexamer contact DNA at a time. Coordinated motions by a converter formed by DNA-disengaged RuvB subunits stimulates ATP hydrolysis and nucleotide exchange. Immobilization of the converter enables RuvB to convert the ATP-contained energy into a lever motion, pulling 2 nucleotides of DNA out of the RuvA tetramer per ATP hydrolyzed, thus driving DNA branch migration. The RuvB motors rotate together with the DNA substrate, which together with the progressing nucleotide cycle form the mechanistic basis for DNA recombination by continuous HJ branch migration. Branch migration allows RuvC to scan DNA until it finds its consensus sequence, where it cleaves and resolves cruciform DNA. The chain is Holliday junction branch migration complex subunit RuvB from Carboxydothermus hydrogenoformans (strain ATCC BAA-161 / DSM 6008 / Z-2901).